We begin with the raw amino-acid sequence, 50 residues long: uncharacterized protein (50 aa).

This is an uncharacterized protein from Dichelobacter nodosus (Bacteroides nodosus).